A 122-amino-acid polypeptide reads, in one-letter code: UPF0102 protein TTE1452 (122 aa).

Belongs to the UPF0102 family.

The polypeptide is UPF0102 protein TTE1452 (Caldanaerobacter subterraneus subsp. tengcongensis (strain DSM 15242 / JCM 11007 / NBRC 100824 / MB4) (Thermoanaerobacter tengcongensis)).